Consider the following 251-residue polypeptide: Tropomyosin-2 (251 aa).

The stretch at 1-251 (MSGEEKLGKL…DTVADEPDDE (251 aa)) forms a coiled coil.

The protein belongs to the tropomyosin family. Homodimer. Striated muscle specific.

This Podocoryna carnea (Hydrozoan) protein is Tropomyosin-2 (TPM2).